The chain runs to 294 residues: tRNA pseudouridine synthase B (294 aa).

D39 serves as the catalytic Nucleophile.

It belongs to the pseudouridine synthase TruB family. Type 1 subfamily.

It catalyses the reaction uridine(55) in tRNA = pseudouridine(55) in tRNA. Its function is as follows. Responsible for synthesis of pseudouridine from uracil-55 in the psi GC loop of transfer RNAs. This chain is tRNA pseudouridine synthase B, found in Streptococcus pyogenes serotype M5 (strain Manfredo).